Reading from the N-terminus, the 350-residue chain is Protein FAM118B (350 aa).

Ala-2 is subject to N-acetylalanine. A Phosphoserine modification is found at Ser-9. The disordered stretch occupies residues 330–350 (AREGQLNGSSAAHGEIRGCST).

The protein belongs to the FAM118 family.

Its subcellular location is the nucleus. The protein localises to the cajal body. May play a role in Cajal bodies formation. In Rattus norvegicus (Rat), this protein is Protein FAM118B (Fam118b).